A 445-amino-acid chain; its full sequence is MVESIAAGQVGDNKHIEMWKIKRLINKLENCKGNGTSMVSLIIPPKEDINKSGKLLVGELSAAQNIKSRITRQSVITAITSTKEKLKLYRQTPTNGLCIYCGVILMEDGKTEKKINFDFEPFRPINQFMYFCGGKFQTEPLTTLLADDDKFGFIIVDGNGALYATLQGNSREILQKITVELPKKHRKGGQSSVRFARLREEKRHNYLRKVAELAGSNFITNDKPNVTGLVLAGNAGFKNELSETDMLDKRLLPIIVSIVDVSYGGENGLNEAITLSADALTNVKFVAEKKLVSTFFEQISLDTGMIVFGVQDTMKALELGAVETILLFEELEITRYVIKNPVKGDTRTLFLNPTQQKDSKYFKDQASGLDMDVIAEDQLAEWLCHNYQNYGAQVEFITDKSQEGYQFVKGFGGIGGFLRYKVDMEDALGDVGDGGDDFDPDTDFI.

Belongs to the eukaryotic release factor 1 family. In terms of assembly, heterodimer of two subunits, one of which binds GTP.

It localises to the cytoplasm. In terms of biological role, directs the termination of nascent peptide synthesis (translation) in response to the termination codon UGA. In Stylonchia UAA and UAG codes for glutamine. In Stylonychia lemnae (Ciliate), this protein is Eukaryotic peptide chain release factor subunit 1 (ERF1).